The sequence spans 311 residues: Homoserine kinase (311 aa).

88 to 98 (PEGLGLGSSGA) lines the ATP pocket.

Belongs to the GHMP kinase family. Homoserine kinase subfamily.

The protein localises to the cytoplasm. It catalyses the reaction L-homoserine + ATP = O-phospho-L-homoserine + ADP + H(+). The protein operates within amino-acid biosynthesis; L-threonine biosynthesis; L-threonine from L-aspartate: step 4/5. In terms of biological role, catalyzes the ATP-dependent phosphorylation of L-homoserine to L-homoserine phosphate. The protein is Homoserine kinase of Saccharolobus solfataricus (strain ATCC 35092 / DSM 1617 / JCM 11322 / P2) (Sulfolobus solfataricus).